Consider the following 899-residue polypeptide: Autophagy-related protein 9 (899 aa).

A disordered region spans residues 1–173 (MASNLLSRLL…DDRGGAPVRD (173 aa)). Topologically, residues 1–224 (MASNLLSRLL…SGIYSMILRR (224 aa)) are cytoplasmic. Low complexity predominate over residues 23 to 33 (SNNQNRRTSSS). Over residues 63–73 (ASSSHMTTESR) the composition is skewed to polar residues. Residues 90–104 (AARAPAWRQPAPARA) are compositionally biased toward low complexity. The span at 124–142 (DPPPNPHPRPDGLPPPVPG) shows a compositional bias: pro residues. Polar residues predominate over residues 151–160 (QWETTRQQQR). The chain crosses the membrane as a helical span at residues 225-245 (TLSLLQSAFVVGFMTFLGWCI). Over 246–270 (DYSKLSGSNKLSQVLVPKCTKEIHG) the chain is Lumenal. The chain crosses the membrane as a helical span at residues 271-291 (FWIFALWVFTIYWLYSFYGLL). Topologically, residues 292-441 (TDIPRLRAMH…RELVRRLRGR (150 aa)) are cytoplasmic. Residues 442 to 462 (FFWTGIISIICAPFAVVFVLA) lie within the membrane without spanning it. Residues 463 to 527 (SYLFKYFTEY…AQFPKDKTEQ (65 aa)) are Cytoplasmic-facing. Residues 528-548 (ISSFVAFIAGAFASVLVAFTL) traverse the membrane as a helical segment. At 549-552 (LDSE) the chain is on the lumenal side. A helical membrane pass occupies residues 553 to 573 (LFLTFEISPGKTAIFWIGVLT). Topologically, residues 574–629 (TIYRVARGSSPQEDQVTDPSYYLDHVIYHTRYKPDSWQDRLHTDEVRAEFAKLYQP) are cytoplasmic. An intramembrane segment occupies 630 to 650 (KILIFAEEILSMVVTPFLLMF). Over 651 to 899 (RLPQCSERIV…AEGRGAGVGV (249 aa)) the chain is Cytoplasmic. The segment at 769–876 (DVGARGTSRG…EEEAPGANRG (108 aa)) is disordered. Positions 851–860 (IGDSWRTSRL) are enriched in polar residues.

This sequence belongs to the ATG9 family. In terms of assembly, homotrimer; forms a homotrimer with a central pore that forms a path between the two membrane leaflets. In terms of processing, phosphorylated by ATG1. ATG1 phosphorylation is required for preautophagosome elongation.

It is found in the preautophagosomal structure membrane. The protein localises to the cytoplasmic vesicle membrane. It localises to the golgi apparatus membrane. Its subcellular location is the endoplasmic reticulum membrane. It catalyses the reaction a 1,2-diacyl-sn-glycero-3-phosphocholine(in) = a 1,2-diacyl-sn-glycero-3-phosphocholine(out). The catalysed reaction is a 1,2-diacyl-sn-glycero-3-phospho-L-serine(in) = a 1,2-diacyl-sn-glycero-3-phospho-L-serine(out). It carries out the reaction a 1,2-diacyl-sn-glycero-3-phosphoethanolamine(in) = a 1,2-diacyl-sn-glycero-3-phosphoethanolamine(out). The enzyme catalyses a 1,2-diacyl-sn-glycero-3-phospho-(1D-myo-inositol-3-phosphate)(in) = a 1,2-diacyl-sn-glycero-3-phospho-(1D-myo-inositol-3-phosphate)(out). In terms of biological role, phospholipid scramblase involved in autophagy and cytoplasm to vacuole transport (Cvt) vesicle formation. Cycles between the preautophagosomal structure/phagophore assembly site (PAS) and the cytoplasmic vesicle pool and supplies membrane for the growing autophagosome. Lipid scramblase activity plays a key role in preautophagosomal structure/phagophore assembly by distributing the phospholipids that arrive through ATG2 from the cytoplasmic to the luminal leaflet of the bilayer, thereby driving autophagosomal membrane expansion. Required for mitophagy. Also involved in endoplasmic reticulum-specific autophagic process and is essential for the survival of cells subjected to severe ER stress. Different machineries are required for anterograde trafficking to the PAS during either the Cvt pathway or bulk autophagy and for retrograde trafficking. This is Autophagy-related protein 9 (ATG9) from Phaeosphaeria nodorum (strain SN15 / ATCC MYA-4574 / FGSC 10173) (Glume blotch fungus).